Here is a 476-residue protein sequence, read N- to C-terminus: RNA-binding protein 45 (476 aa).

The disordered stretch occupies residues 1–20; that stretch reads MDEAGSSASGGGFRPGVDSL. RRM domains are found at residues 26 to 106 and 121 to 195; these read SRIF…IAQS and TRIF…PKNK. Lysine 34 is covalently cross-linked (Glycyl lysine isopeptide (Lys-Gly) (interchain with G-Cter in SUMO2)). Phosphoserine occurs at positions 199 and 464. Positions 392–464 constitute an RRM 3 domain; it reads ERLFIVFNPH…VRLKVMLADS (73 aa).

It is found in the cytoplasm. The protein resides in the nucleus. In terms of biological role, RNA-binding protein with binding specificity for poly(C). May play an important role in neural development. The chain is RNA-binding protein 45 (RBM45) from Homo sapiens (Human).